Consider the following 418-residue polypeptide: Hydroxysteroid dehydrogenase-like protein 2 (418 aa).

Residues 17 to 23, K42, and D74 contribute to the NADP(+) site; that span reads GASRGIG. K42 bears the N6-(2-hydroxyisobutyryl)lysine mark. At K116 the chain carries N6-acetyllysine. Y168 (proton acceptor) is an active-site residue. K172 contacts NADP(+). The SCP2 domain occupies 306-415; the sequence is RSGAVEETFR…KLEKLMNQMN (110 aa). Residue K318 is modified to N6-succinyllysine.

This sequence belongs to the short-chain dehydrogenases/reductases (SDR) family. Ubiquitous.

Its subcellular location is the peroxisome. The protein resides in the mitochondrion. Functionally, has apparently no steroid dehydrogenase activity. Controls bile acid (BA) and lipid metabolism in response to nutritional cues. In Homo sapiens (Human), this protein is Hydroxysteroid dehydrogenase-like protein 2.